The chain runs to 221 residues: Thiamine-phosphate synthase (221 aa).

4-amino-2-methyl-5-(diphosphooxymethyl)pyrimidine is bound by residues 44–48 (QFREK) and Asn-79. Positions 80 and 99 each coordinate Mg(2+). 4-amino-2-methyl-5-(diphosphooxymethyl)pyrimidine is bound at residue Ser-117. Residue 143–145 (TRS) participates in 2-[(2R,5Z)-2-carboxy-4-methylthiazol-5(2H)-ylidene]ethyl phosphate binding. Lys-146 is a 4-amino-2-methyl-5-(diphosphooxymethyl)pyrimidine binding site. Residues Gly-175 and 195–196 (IS) contribute to the 2-[(2R,5Z)-2-carboxy-4-methylthiazol-5(2H)-ylidene]ethyl phosphate site.

It belongs to the thiamine-phosphate synthase family. Requires Mg(2+) as cofactor.

It carries out the reaction 2-[(2R,5Z)-2-carboxy-4-methylthiazol-5(2H)-ylidene]ethyl phosphate + 4-amino-2-methyl-5-(diphosphooxymethyl)pyrimidine + 2 H(+) = thiamine phosphate + CO2 + diphosphate. The enzyme catalyses 2-(2-carboxy-4-methylthiazol-5-yl)ethyl phosphate + 4-amino-2-methyl-5-(diphosphooxymethyl)pyrimidine + 2 H(+) = thiamine phosphate + CO2 + diphosphate. It catalyses the reaction 4-methyl-5-(2-phosphooxyethyl)-thiazole + 4-amino-2-methyl-5-(diphosphooxymethyl)pyrimidine + H(+) = thiamine phosphate + diphosphate. The protein operates within cofactor biosynthesis; thiamine diphosphate biosynthesis; thiamine phosphate from 4-amino-2-methyl-5-diphosphomethylpyrimidine and 4-methyl-5-(2-phosphoethyl)-thiazole: step 1/1. Its function is as follows. Condenses 4-methyl-5-(beta-hydroxyethyl)thiazole monophosphate (THZ-P) and 2-methyl-4-amino-5-hydroxymethyl pyrimidine pyrophosphate (HMP-PP) to form thiamine monophosphate (TMP). The protein is Thiamine-phosphate synthase of Geobacillus thermodenitrificans (strain NG80-2).